The primary structure comprises 178 residues: Alkyl hydroperoxide reductase AhpD (178 aa).

Catalysis depends on Cys131, which acts as the Proton donor. Cys131 and Cys134 are joined by a disulfide. Residue Cys134 is the Cysteine sulfenic acid (-SOH) intermediate of the active site.

The protein belongs to the AhpD family.

The enzyme catalyses N(6)-[(R)-dihydrolipoyl]-L-lysyl-[lipoyl-carrier protein] + a hydroperoxide = N(6)-[(R)-lipoyl]-L-lysyl-[lipoyl-carrier protein] + an alcohol + H2O. Antioxidant protein with alkyl hydroperoxidase activity. Required for the reduction of the AhpC active site cysteine residues and for the regeneration of the AhpC enzyme activity. The sequence is that of Alkyl hydroperoxide reductase AhpD from Methylocella silvestris (strain DSM 15510 / CIP 108128 / LMG 27833 / NCIMB 13906 / BL2).